The chain runs to 747 residues: Protein PHTF2 (747 aa).

One can recognise a PHTF domain in the interval 6-153 (TDAIVWYQKK…VHCQIVSTRT (148 aa)). 2 helical membrane-spanning segments follow: residues 98–118 (VIFS…VLFC) and 126–146 (IPLT…TVHC). Disordered regions lie at residues 170 to 192 (KAAH…TQEG) and 268 to 365 (EDAA…SETE). Residues 172–181 (AHLEVHREGD) show a composition bias toward basic and acidic residues. Positions 182 to 192 (GSSTTDNTQEG) are enriched in polar residues. N-linked (GlcNAc...) asparagine glycosylation is present at asparagine 291. Basic residues predominate over residues 321-331 (RNRKPHHYKKH). The span at 340–352 (SGTSCSSRCSSSR) shows a compositional bias: low complexity. A compositionally biased stretch (basic and acidic residues) spans 353–362 (QDSESTRPES). Transmembrane regions (helical) follow at residues 459–479 (IGYQ…PFVF), 515–535 (VLIS…LLCV), 596–616 (VIVS…CAQL), and 630–650 (WELV…VTLG). Residues asparagine 659 and asparagine 718 are each glycosylated (N-linked (GlcNAc...) asparagine). A helical membrane pass occupies residues 722-742 (VVILSAVSGVISDLLGFNLKL).

It localises to the membrane. The chain is Protein PHTF2 (Phtf2) from Mus musculus (Mouse).